The following is a 159-amino-acid chain: Putative esterase DR_2406 (159 aa).

This sequence belongs to the thioesterase PaaI family.

This chain is Putative esterase DR_2406, found in Deinococcus radiodurans (strain ATCC 13939 / DSM 20539 / JCM 16871 / CCUG 27074 / LMG 4051 / NBRC 15346 / NCIMB 9279 / VKM B-1422 / R1).